The chain runs to 279 residues: Pleckstrin homology domain-containing family F member 1 (279 aa).

In terms of domain architecture, PH spans V35–R131. Residues D152–A212 form an FYVE-type zinc finger. Positions 158, 161, 175, 178, 183, 186, 204, and 207 each coordinate Zn(2+). The interval E219–Q264 is disordered. A compositionally biased stretch (acidic residues) spans G244 to R253.

It is found in the nucleus. It localises to the cytoplasm. The protein localises to the perinuclear region. The protein resides in the lysosome. Functionally, may induce apoptosis through the lysosomal-mitochondrial pathway. Translocates to the lysosome initiating the permeabilization of lysosomal membrane (LMP) and resulting in the release of CTSD and CTSL to the cytoplasm. Triggers the caspase-independent apoptosis by altering mitochondrial membrane permeabilization (MMP) resulting in the release of PDCD8. This chain is Pleckstrin homology domain-containing family F member 1 (Plekhf1), found in Rattus norvegicus (Rat).